The sequence spans 84 residues: Small ribosomal subunit protein uS17 (84 aa).

The protein belongs to the universal ribosomal protein uS17 family. Part of the 30S ribosomal subunit.

In terms of biological role, one of the primary rRNA binding proteins, it binds specifically to the 5'-end of 16S ribosomal RNA. This is Small ribosomal subunit protein uS17 from Clostridium botulinum (strain ATCC 19397 / Type A).